Reading from the N-terminus, the 807-residue chain is Putative histidine biosynthesis bifunctional protein HisCD (807 aa).

The tract at residues 1 to 440 (MTDHFDTLIR…ALNIAGQGVN (440 aa)) is histidinol dehydrogenase. Zn(2+) is bound by residues Q261 and H264. Active-site residues include E328 and H329. The Zn(2+) site is built by D362 and H421. The segment at 441–807 (MNNIFDANLL…VNEQPKEIAN (367 aa)) is histidinol-phosphate aminotransferase. K655 carries the N6-(pyridoxal phosphate)lysine modification.

This sequence in the N-terminal section; belongs to the histidinol dehydrogenase family. In the C-terminal section; belongs to the class-II pyridoxal-phosphate-dependent aminotransferase family. Histidinol-phosphate aminotransferase subfamily. In terms of assembly, homodimer. It depends on Zn(2+) as a cofactor. Pyridoxal 5'-phosphate serves as cofactor.

It catalyses the reaction L-histidinol phosphate + 2-oxoglutarate = 3-(imidazol-4-yl)-2-oxopropyl phosphate + L-glutamate. The enzyme catalyses L-histidinol + 2 NAD(+) + H2O = L-histidine + 2 NADH + 3 H(+). It participates in amino-acid biosynthesis; L-histidine biosynthesis; L-histidine from 5-phospho-alpha-D-ribose 1-diphosphate: step 7/9. It functions in the pathway amino-acid biosynthesis; L-histidine biosynthesis; L-histidine from 5-phospho-alpha-D-ribose 1-diphosphate: step 9/9. Catalyzes the sequential NAD-dependent oxidations of L-histidinol to L-histidinaldehyde and then to L-histidine. The polypeptide is Putative histidine biosynthesis bifunctional protein HisCD (hisCD) (Photorhabdus laumondii subsp. laumondii (strain DSM 15139 / CIP 105565 / TT01) (Photorhabdus luminescens subsp. laumondii)).